A 217-amino-acid polypeptide reads, in one-letter code: Coiled-coil domain-containing protein 124-B (217 aa).

A disordered region spans residues 1 to 123 (MPKKFQSENT…EKPKTHLEIP (123 aa)). Basic and acidic residues-rich tracts occupy residues 18 to 45 (RKAE…DDKH), 52 to 74 (RKEE…QRLL), and 98 to 123 (QIEE…LEIP). Positions 41–83 (DDDKHVVRKEHRKEEKEKKRLELLERKKESQRLLDEEDSKMKG) form a coiled coil.

Belongs to the CCDC124 family. As to quaternary structure, associates with translationally inactive ribosomes in the nonrotated state.

It is found in the cytoplasm. It localises to the cytoskeleton. Its subcellular location is the microtubule organizing center. The protein localises to the centrosome. The protein resides in the midbody. Ribosome-binding protein involved in ribosome hibernation: associates with translationally inactive ribosomes and stabilizes the nonrotated conformation of the 80S ribosome, thereby promoting ribosome preservation and storage. This chain is Coiled-coil domain-containing protein 124-B (ccdc124-b), found in Xenopus laevis (African clawed frog).